We begin with the raw amino-acid sequence, 165 residues long: uncharacterized protein (165 aa).

An N-terminal signal peptide occupies residues 1-25 (MKRVLFSVIVFTAVGFTFCQSKAHA).

This is an uncharacterized protein from Bacillus subtilis (strain 168).